The chain runs to 325 residues: Aldo-keto reductase family 1 member A1 (325 aa).

N-acetylalanine is present on Ala2. Ser4 carries the phosphoserine modification. NADP(+)-binding positions include 11–20, Thr21, and Trp22; that span reads GQKMPLIGLG. At Ser38 the chain carries Phosphoserine. Residue Asp45 coordinates NADP(+). Tyr50 functions as the Proton donor in the catalytic mechanism. At Lys127 the chain carries N6-acetyllysine; alternate. Lys127 is subject to N6-succinyllysine; alternate. NADP(+) contacts are provided by Ser162, Asn163, Ser211, Leu213, Ser215, Ser216, Lys263, Ser264, Val265, Thr266, Arg269, and Asn273. Ser211 is subject to Phosphoserine.

Belongs to the aldo/keto reductase family. Monomer.

Its subcellular location is the cytoplasm. The protein localises to the cytosol. It is found in the apical cell membrane. The enzyme catalyses a primary alcohol + NADP(+) = an aldehyde + NADPH + H(+). It catalyses the reaction L-gulonate + NADP(+) = aldehydo-D-glucuronate + NADPH + H(+). The catalysed reaction is L-gulono-1,4-lactone + NADP(+) = D-glucurono-3,6-lactone + NADPH + H(+). It carries out the reaction allyl alcohol + NADP(+) = acrolein + NADPH + H(+). The enzyme catalyses glycerol + NADP(+) = D-glyceraldehyde + NADPH + H(+). It catalyses the reaction glycerol + NADP(+) = L-glyceraldehyde + NADPH + H(+). The catalysed reaction is hydroxyacetone + NADP(+) = methylglyoxal + NADPH + H(+). It carries out the reaction 3-deoxyfructose + NADP(+) = 3-deoxyglucosone + NADPH + H(+). The enzyme catalyses (R)-mevalonate + NADP(+) = (R)-mevaldate + NADPH + H(+). It catalyses the reaction pyridine 3-methanol + NADP(+) = pyridine-3-carbaldehyde + NADPH + H(+). The catalysed reaction is S-nitroso-CoA + NADPH + H(+) = sulfinamide-CoA + NADP(+). It carries out the reaction S-nitrosoglutathione + NADPH + H(+) = S-(hydroxysulfenamide)glutathione + NADP(+). In terms of biological role, catalyzes the NADPH-dependent reduction of a wide variety of carbonyl-containing compounds to their corresponding alcohols. Displays enzymatic activity towards endogenous metabolites such as aromatic and aliphatic aldehydes, ketones, monosaccharides and bile acids, with a preference for negatively charged substrates, such as glucuronate and succinic semialdehyde. Plays an important role in ascorbic acid biosynthesis by catalyzing the reduction of D-glucuronic acid and D-glucurono-gamma-lactone. Functions as a detoxifiying enzyme by reducing a range of toxic aldehydes. Reduces methylglyoxal and 3-deoxyglucosone, which are present at elevated levels under hyperglycemic conditions and are cytotoxic. Involved also in the detoxification of lipid-derived aldehydes like acrolein. Plays a role in the activation of procarcinogens, such as polycyclic aromatic hydrocarbon trans-dihydrodiols, and in the metabolism of various xenobiotics and drugs. Also acts as an inhibitor of protein S-nitrosylation by mediating degradation of S-nitroso-coenzyme A (S-nitroso-CoA), a cofactor required to S-nitrosylate proteins. S-nitroso-CoA reductase activity is involved in reprogramming intermediary metabolism in renal proximal tubules, notably by inhibiting protein S-nitrosylation of isoform 2 of PKM (PKM2). Also acts as a S-nitroso-glutathione reductase by catalyzing the NADPH-dependent reduction of S-nitrosoglutathione. Displays no reductase activity towards retinoids. This Bos taurus (Bovine) protein is Aldo-keto reductase family 1 member A1.